Reading from the N-terminus, the 115-residue chain is Large ribosomal subunit protein bL19 (115 aa).

This sequence belongs to the bacterial ribosomal protein bL19 family.

Functionally, this protein is located at the 30S-50S ribosomal subunit interface and may play a role in the structure and function of the aminoacyl-tRNA binding site. This Tolumonas auensis (strain DSM 9187 / NBRC 110442 / TA 4) protein is Large ribosomal subunit protein bL19.